We begin with the raw amino-acid sequence, 484 residues long: Pentatricopeptide repeat-containing protein At1g09190 (484 aa).

PPR repeat units follow at residues asparagine 66–alanine 100, aspartate 101–arginine 135, leucine 136–arginine 166, asparagine 167–arginine 197, serine 198–proline 232, aspartate 233–lysine 267, phenylalanine 269–arginine 299, asparagine 300–alanine 334, asparagine 336–arginine 366, and arginine 372–alanine 406. The interval methionine 407–valine 482 is type E motif.

It belongs to the PPR family. PCMP-E subfamily.

The chain is Pentatricopeptide repeat-containing protein At1g09190 (PCMP-E70) from Arabidopsis thaliana (Mouse-ear cress).